The sequence spans 92 residues: Small ribosomal subunit protein uS19 (92 aa).

The interval 73–92 (EFSPTRSFRGHAGAKNKGKK) is disordered. Basic residues predominate over residues 80 to 92 (FRGHAGAKNKGKK).

It belongs to the universal ribosomal protein uS19 family.

Functionally, protein S19 forms a complex with S13 that binds strongly to the 16S ribosomal RNA. This chain is Small ribosomal subunit protein uS19, found in Flavobacterium psychrophilum (strain ATCC 49511 / DSM 21280 / CIP 103535 / JIP02/86).